We begin with the raw amino-acid sequence, 188 residues long: ATP-dependent protease subunit HslV (188 aa).

Thr-8 is an active-site residue. The Na(+) site is built by Ala-165, Cys-168, and Thr-171.

This sequence belongs to the peptidase T1B family. HslV subfamily. In terms of assembly, a double ring-shaped homohexamer of HslV is capped on each side by a ring-shaped HslU homohexamer. The assembly of the HslU/HslV complex is dependent on binding of ATP.

Its subcellular location is the cytoplasm. It catalyses the reaction ATP-dependent cleavage of peptide bonds with broad specificity.. Its activity is regulated as follows. Allosterically activated by HslU binding. Its function is as follows. Protease subunit of a proteasome-like degradation complex believed to be a general protein degrading machinery. The protein is ATP-dependent protease subunit HslV of Neorickettsia sennetsu (strain ATCC VR-367 / Miyayama) (Ehrlichia sennetsu).